A 304-amino-acid chain; its full sequence is Cytochrome c biogenesis protein CcsA (304 aa).

The next 8 helical transmembrane spans lie at 11–31 (SLGF…FWAV), 37–57 (AGLV…QLIL), 63–83 (GHFP…ACTL), 96–116 (IVAA…SFAL), 141–161 (VIMV…AVLV), 212–232 (TITV…VWAN), 246–263 (TWAL…HTRL), and 275–295 (VAVV…LLGI).

The protein belongs to the CcmF/CycK/Ccl1/NrfE/CcsA family. May interact with ccs1.

It is found in the cellular thylakoid membrane. Required during biogenesis of c-type cytochromes (cytochrome c6 and cytochrome f) at the step of heme attachment. The polypeptide is Cytochrome c biogenesis protein CcsA (Synechococcus sp. (strain CC9605)).